A 500-amino-acid polypeptide reads, in one-letter code: L-arabinose isomerase (500 aa).

Mn(2+) is bound by residues glutamate 306, glutamate 333, histidine 350, and histidine 450.

This sequence belongs to the arabinose isomerase family. As to quaternary structure, homohexamer. The cofactor is Mn(2+).

The enzyme catalyses beta-L-arabinopyranose = L-ribulose. Its pathway is carbohydrate degradation; L-arabinose degradation via L-ribulose; D-xylulose 5-phosphate from L-arabinose (bacterial route): step 1/3. Catalyzes the conversion of L-arabinose to L-ribulose. The protein is L-arabinose isomerase of Escherichia coli O7:K1 (strain IAI39 / ExPEC).